Reading from the N-terminus, the 322-residue chain is Elongation factor P--(R)-beta-lysine ligase (322 aa).

75–77 (SPE) contributes to the substrate binding site. Residue 99–101 (RNE) participates in ATP binding. Tyrosine 117 serves as a coordination point for substrate. 241 to 242 (EL) provides a ligand contact to ATP. Glutamate 248 lines the substrate pocket. Glycine 297 lines the ATP pocket.

Belongs to the class-II aminoacyl-tRNA synthetase family. EpmA subfamily. As to quaternary structure, homodimer.

It carries out the reaction D-beta-lysine + L-lysyl-[protein] + ATP = N(6)-((3R)-3,6-diaminohexanoyl)-L-lysyl-[protein] + AMP + diphosphate + H(+). With EpmB is involved in the beta-lysylation step of the post-translational modification of translation elongation factor P (EF-P). Catalyzes the ATP-dependent activation of (R)-beta-lysine produced by EpmB, forming a lysyl-adenylate, from which the beta-lysyl moiety is then transferred to the epsilon-amino group of a conserved specific lysine residue in EF-P. The chain is Elongation factor P--(R)-beta-lysine ligase from Avibacterium paragallinarum (Haemophilus gallinarum).